Here is a 604-residue protein sequence, read N- to C-terminus: Glutamine--fructose-6-phosphate aminotransferase [isomerizing] (604 aa).

Cys2 (nucleophile; for GATase activity) is an active-site residue. Residues 2–218 (CGIVGVVGNR…DKELVILTKD (217 aa)) enclose the Glutamine amidotransferase type-2 domain. 2 SIS domains span residues 284–423 (IVKT…ANGK) and 456–594 (VEKL…VDKP). Lys599 (for Fru-6P isomerization activity) is an active-site residue.

Homodimer.

It is found in the cytoplasm. The enzyme catalyses D-fructose 6-phosphate + L-glutamine = D-glucosamine 6-phosphate + L-glutamate. In terms of biological role, catalyzes the first step in hexosamine metabolism, converting fructose-6P into glucosamine-6P using glutamine as a nitrogen source. This Streptococcus pyogenes serotype M6 (strain ATCC BAA-946 / MGAS10394) protein is Glutamine--fructose-6-phosphate aminotransferase [isomerizing].